The primary structure comprises 216 residues: Phosphatidylserine decarboxylase proenzyme (216 aa).

Serine 182 (schiff-base intermediate with substrate; via pyruvic acid) is an active-site residue. Pyruvic acid (Ser); by autocatalysis is present on serine 182.

Belongs to the phosphatidylserine decarboxylase family. PSD-A subfamily. As to quaternary structure, heterodimer of a large membrane-associated beta subunit and a small pyruvoyl-containing alpha subunit. The cofactor is pyruvate. Post-translationally, is synthesized initially as an inactive proenzyme. Formation of the active enzyme involves a self-maturation process in which the active site pyruvoyl group is generated from an internal serine residue via an autocatalytic post-translational modification. Two non-identical subunits are generated from the proenzyme in this reaction, and the pyruvate is formed at the N-terminus of the alpha chain, which is derived from the carboxyl end of the proenzyme. The post-translation cleavage follows an unusual pathway, termed non-hydrolytic serinolysis, in which the side chain hydroxyl group of the serine supplies its oxygen atom to form the C-terminus of the beta chain, while the remainder of the serine residue undergoes an oxidative deamination to produce ammonia and the pyruvoyl prosthetic group on the alpha chain.

The protein resides in the cell membrane. The enzyme catalyses a 1,2-diacyl-sn-glycero-3-phospho-L-serine + H(+) = a 1,2-diacyl-sn-glycero-3-phosphoethanolamine + CO2. The protein operates within phospholipid metabolism; phosphatidylethanolamine biosynthesis; phosphatidylethanolamine from CDP-diacylglycerol: step 2/2. Its function is as follows. Catalyzes the formation of phosphatidylethanolamine (PtdEtn) from phosphatidylserine (PtdSer). The polypeptide is Phosphatidylserine decarboxylase proenzyme (Burkholderia mallei (strain NCTC 10247)).